The sequence spans 316 residues: tRNA dimethylallyltransferase (316 aa).

Residue 17–24 participates in ATP binding; that stretch reads GPTASGKT. 19 to 24 is a binding site for substrate; that stretch reads TASGKT. Interaction with substrate tRNA regions lie at residues 42–45, 166–170, 247–252, and 280–287; these read DSAL, QRLSR, RCVGYR, and KRQITWLR.

It belongs to the IPP transferase family. Monomer. Mg(2+) is required as a cofactor.

The catalysed reaction is adenosine(37) in tRNA + dimethylallyl diphosphate = N(6)-dimethylallyladenosine(37) in tRNA + diphosphate. Catalyzes the transfer of a dimethylallyl group onto the adenine at position 37 in tRNAs that read codons beginning with uridine, leading to the formation of N6-(dimethylallyl)adenosine (i(6)A). The sequence is that of tRNA dimethylallyltransferase from Cronobacter sakazakii (strain ATCC BAA-894) (Enterobacter sakazakii).